Here is a 352-residue protein sequence, read N- to C-terminus: Aliphatic aldoxime dehydratase (352 aa).

S219 is a binding site for an aliphatic aldoxime. H299 contributes to the heme b binding site. H320 contributes to the an aliphatic aldoxime binding site. H320 is a catalytic residue.

The protein belongs to the heme-containing dehydratase family. As to quaternary structure, homodimer. Heme b serves as cofactor. Ca(2+) is required as a cofactor.

It carries out the reaction an aliphatic aldoxime = a nitrile + H2O. With respect to regulation, active when the heme iron is in the ferrous state. Is very sensitive to AgNO(3), is also inhibited by hydroxylamine and phenylhydrazine, and hardly inhibited by thiol reagents. Not sensitive to chelating agents and serine-modifying reagents. Its function is as follows. Catalyzes the dehydration of aldoximes to their corresponding nitrile. Aliphatic aldoximes are more effective substrates than aromatic aldoximes. Shows high activity with butyraldoxime and acetaldoxime, but only weak activity with the aromatic aldoxime pyridine-2-aldoxime. Cannot use benzaldoxime, isonitrosoacetophenone and pyridine-4-aldoxime. Is involved in the metabolism of aldoxime in vivo. The polypeptide is Aliphatic aldoxime dehydratase (Pseudomonas chlororaphis (Pseudomonas aureofaciens)).